The primary structure comprises 651 residues: Polyadenylate-binding protein 1 (651 aa).

Residues 1 to 27 (MSSTESPVPAAAAPAEAVPASTPAPAA) show a composition bias toward low complexity. The tract at residues 1 to 42 (MSSTESPVPAAAAPAEAVPASTPAPAAEQPAVGNGEQRNNAD) is disordered. RRM domains follow at residues 47-125 (TSLY…WSQR), 135-211 (GNIF…HHIP), 227-304 (TNVY…RAQK), and 330-407 (VNLY…LAQR). Disordered stretches follow at residues 481-554 (QPGQ…EADQ) and 632-651 (QNDS…KTEA). A compositionally biased stretch (pro residues) spans 529–540 (AGQPVPGQPMPR). The 78-residue stretch at 555–632 (PGALTAAALA…ALEVLKEYQQ (78 aa)) folds into the PABC domain. Over residues 636–651 (AGAEAEANAEAPKTEA) the composition is skewed to low complexity.

It belongs to the polyadenylate-binding protein type-1 family. As to quaternary structure, part of large ribonucleoprotein complexes (mRNPs) containing RNA-binding proteins RRM4 and PAB1, endosome-binding protein UPA1, core scaffold protein UPA2 and associated factor GRP1. Interacts (via PABC domain) with UPA1 (via PAM2 domain). Interacts (via PABC domain) with UPA2 (via PAM2 domains).

Its subcellular location is the cytoplasm. It is found in the cytoskeleton. The protein resides in the endosome. Its function is as follows. RNA-binding protein involved in the formation of polar-growing hyphae which is essential for infection by the plant pathogen. Component of endosomal mRNA transport that regulates polarity of the infectious hyphae by transporting a broad spectrum of cargo mRNAs from the nucleus to cell poles. The protein is Polyadenylate-binding protein 1 of Mycosarcoma maydis (Corn smut fungus).